The primary structure comprises 315 residues: N-acetyl-gamma-glutamyl-phosphate reductase (315 aa).

Residue cysteine 117 is part of the active site.

Belongs to the NAGSA dehydrogenase family. Type 2 subfamily.

The protein localises to the cytoplasm. It catalyses the reaction N-acetyl-L-glutamate 5-semialdehyde + phosphate + NADP(+) = N-acetyl-L-glutamyl 5-phosphate + NADPH + H(+). The protein operates within amino-acid biosynthesis; L-arginine biosynthesis; N(2)-acetyl-L-ornithine from L-glutamate: step 3/4. Catalyzes the NADPH-dependent reduction of N-acetyl-5-glutamyl phosphate to yield N-acetyl-L-glutamate 5-semialdehyde. The chain is N-acetyl-gamma-glutamyl-phosphate reductase from Burkholderia ambifaria (strain ATCC BAA-244 / DSM 16087 / CCUG 44356 / LMG 19182 / AMMD) (Burkholderia cepacia (strain AMMD)).